A 146-amino-acid polypeptide reads, in one-letter code: Putative transposon Ty5-1 protein YCL075W (146 aa).

The sequence is that of Putative transposon Ty5-1 protein YCL075W (TY5B) from Saccharomyces cerevisiae (strain ATCC 204508 / S288c) (Baker's yeast).